The following is a 238-amino-acid chain: Lactate utilization protein A (238 aa).

The protein belongs to the LutA/YkgE family.

Its function is as follows. Is involved in L-lactate degradation and allows cells to grow with lactate as the sole carbon source. This is Lactate utilization protein A from Bacillus velezensis (strain DSM 23117 / BGSC 10A6 / LMG 26770 / FZB42) (Bacillus amyloliquefaciens subsp. plantarum).